Consider the following 439-residue polypeptide: Nitroalkane oxidase (439 aa).

FAD-binding positions include Leu-131–Ser-134, Thr-139–Asn-141, Trp-169–Ser-171, Arg-304, His-313–Gln-314, Lys-375–Met-379, and Leu-400–Gly-404. Residue Asp-402 is the Proton acceptor of the active site.

Belongs to the acyl-CoA dehydrogenase family. Homotetramer. Requires FAD as cofactor.

It carries out the reaction a primary nitroalkane + O2 + H2O = an aldehyde + nitrite + H2O2 + H(+). The enzyme catalyses a secondary nitroalkane + O2 + H2O = a ketone + nitrite + H2O2 + H(+). With respect to regulation, strongly inhibited by mercury chloride and KCN. Catalyzes the oxidative denitrification of neutral nitroalkanes, including 3-nitro-2-pentanol, 1-nitropropane, 2-nitropropane, nitroethane and nitrocyclohexane, and may thereby protect the organism against toxic compounds. Has no detectable acyl-CoA dehydrogenase activity. The polypeptide is Nitroalkane oxidase (Fusarium oxysporum (Fusarium vascular wilt)).